The primary structure comprises 194 residues: Translation machinery-associated protein 22 (194 aa).

In terms of domain architecture, SUI1 spans 102-173 (VQIKRVERNK…DVQDWLLEVY (72 aa)).

Belongs to the DENR family. In terms of assembly, interacts with the 40S ribosomal subunit.

It is found in the cytoplasm. This is Translation machinery-associated protein 22 (tma22) from Aspergillus oryzae (strain ATCC 42149 / RIB 40) (Yellow koji mold).